Here is a 2766-residue protein sequence, read N- to C-terminus: PDZ domain-containing protein 2 (2766 aa).

The region spanning 85–177 is the PDZ 1 domain; it reads LSFGNIPVFG…GGFIYLIMLR (93 aa). Disordered regions lie at residues 189–315 and 419–452; these read GNSG…KTGK and MPGS…KLKS. Residues 242–254 are compositionally biased toward acidic residues; it reads TADDPNSELENGA. The segment covering 280–296 has biased composition (basic and acidic residues); sequence HLERSEADSEVELRVPK. The PDZ 2 domain occupies 334–419; that stretch reads KMELLKESDG…MVQLVVASKM (86 aa). Serine 517 is modified (phosphoserine). The PDZ 3 domain occupies 535–621; the sequence is IIGLYKEKGK…GLFVLTVRTK (87 aa). Residues 627–636 show a composition bias toward polar residues; the sequence is LTPCSTPTHM. Residues 627 to 673 are disordered; the sequence is LTPCSTPTHMSRSSSPSFNTNSGGTPAGGGQEEGGSSSLGRKAPGPK. Positions 637–650 are enriched in low complexity; it reads SRSSSPSFNTNSGG. The PDZ 4 domain maps to 679–764; sequence EVTLNKEPRV…GPVRLVIGRH (86 aa). A compositionally biased stretch (polar residues) spans 783–794; sequence YQESREANSSPG. Disordered regions lie at residues 783-803 and 834-853; these read YQES…KSPS and AGSE…EDGS. Phosphoserine occurs at positions 891 and 895. Disordered stretches follow at residues 915–966, 990–1425, 1456–1531, 1725–1909, 1924–1967, 2015–2070, 2146–2174, 2262–2397, 2424–2450, and 2465–2496; these read NGGS…KQEE, HSIL…PSVL, ISLS…CPGT, DSQG…LPEQ, DTSC…IRQS, ERVP…ASQV, FSSH…AMGG, DRPT…ERRT, QLEI…GHAD, and TRAY…WATP. Acidic residues predominate over residues 918-927; the sequence is SDDEDFDGEG. Basic and acidic residues predominate over residues 1021–1038; sequence GRKEMSGSRSSPKLEYRV. 3 stretches are compositionally biased toward polar residues: residues 1040–1061, 1126–1137, and 1189–1220; these read TDTQ…SENL, PGDSSVPTNCGP, and SETP…SQGI. Composition is skewed to low complexity over residues 1379–1393 and 1456–1471; these read SQPP…SHHA and ISLS…SPSS. Serine 1767 bears the Phosphoserine mark. Residues 1797-1806 are compositionally biased toward basic residues; the sequence is CSPKLKRLNS. Residues 1884 to 1901 show a composition bias toward polar residues; it reads LRTSASDTSIRTFTSPLT. Low complexity-rich tracts occupy residues 1924-1937 and 1947-1963; these read DTSC…PRSG and SGSA…ALAG. 2 stretches are compositionally biased toward low complexity: residues 2280–2296 and 2305–2321; these read PPIN…GSPS and RSLS…SSLL. Polar residues-rich tracts occupy residues 2322–2347 and 2362–2372; these read PQMT…SNKG and PTSTVSPASPS. Residues 2550–2634 enclose the PDZ 5 domain; sequence FIVLNKKEGS…HKHALMIIKK (85 aa). The disordered stretch occupies residues 2635–2667; sequence GNDQPGPSFKQEPPSANGKGPFPRRTLPLEPGA. In terms of domain architecture, PDZ 6 spans 2678–2763; that stretch reads CVEVLKTSAG…GPVQLVIRKH (86 aa).

Interacts with SCN10A, CTNND2 and PKP4. In terms of processing, a secreted form is produced by caspase-mediated proteolytic cleavage. As to expression, expressed in the heart, liver, brain, spleen, lung, kidney, testis and skeletal muscle.

Its subcellular location is the nucleus. It localises to the cytoplasm. The protein resides in the endoplasmic reticulum. It is found in the cell junction. The protein localises to the secreted. The protein is PDZ domain-containing protein 2 (Pdzd2) of Rattus norvegicus (Rat).